The sequence spans 355 residues: Homeotic protein knotted-1 (355 aa).

Residues 205 to 233 are disordered; that stretch reads KCEGVGSSEEDQDNSGGETELPEIDPRAE. Positions 236–256 constitute an ELK domain; that stretch reads ELKNHLLRKYSGYLSSLKQEL. The homeobox; TALE-type DNA-binding region spans 257–320; the sequence is SKKKKKGKLP…NQRKRHWKPS (64 aa).

This sequence belongs to the TALE/KNOX homeobox family. Expressed in the apical meristems, in the newly emerged lateral primordia in the floral bud, in their vascular bundles and in the cortex parenchyma of the floral pedicle. Also present in the lateral tips of leaf primordia.

The protein resides in the nucleus. Functionally, appears to be involved in meristem formation and in the regulation of leaf morphology. Misexpression makes the leaf more compound which is always associated with growth retardation and loss of apical dominance, resulting in dwarfed, bushy plants. Probably binds to the DNA sequence 5'-TGAC-3'. This chain is Homeotic protein knotted-1 (KN1), found in Solanum lycopersicum (Tomato).